A 218-amino-acid polypeptide reads, in one-letter code: Cytochrome b6 (218 aa).

A helical transmembrane segment spans residues 35–55 (IFYCLGGITLVCFLIQFATGF). Cys-38 provides a ligand contact to heme c. The heme b site is built by His-89 and His-103. A run of 3 helical transmembrane segments spans residues 93-113 (ASMM…TGGF), 119-139 (LTWV…VTGY), and 189-209 (LHTF…FLMI). Heme b contacts are provided by His-190 and His-205.

It belongs to the cytochrome b family. PetB subfamily. As to quaternary structure, the 4 large subunits of the cytochrome b6-f complex are cytochrome b6, subunit IV (17 kDa polypeptide, PetD), cytochrome f and the Rieske protein, while the 4 small subunits are PetG, PetL, PetM and PetN. The complex functions as a dimer. It depends on heme b as a cofactor. Heme c serves as cofactor.

The protein localises to the cellular thylakoid membrane. Its function is as follows. Component of the cytochrome b6-f complex, which mediates electron transfer between photosystem II (PSII) and photosystem I (PSI), cyclic electron flow around PSI, and state transitions. This chain is Cytochrome b6, found in Synechococcus sp. (strain WH7803).